We begin with the raw amino-acid sequence, 201 residues long: Small ribosomal subunit protein uS5 (201 aa).

Residues Met-1–Ala-28 are disordered. Basic and acidic residues predominate over residues Gly-14–Asp-23. An S5 DRBM domain is found at Tyr-34 to Val-97.

This sequence belongs to the universal ribosomal protein uS5 family. In terms of assembly, part of the 30S ribosomal subunit. Contacts proteins S4 and S8.

With S4 and S12 plays an important role in translational accuracy. Its function is as follows. Located at the back of the 30S subunit body where it stabilizes the conformation of the head with respect to the body. In Streptomyces coelicolor (strain ATCC BAA-471 / A3(2) / M145), this protein is Small ribosomal subunit protein uS5.